The sequence spans 75 residues: Exodeoxyribonuclease 7 small subunit (75 aa).

This sequence belongs to the XseB family. As to quaternary structure, heterooligomer composed of large and small subunits.

It is found in the cytoplasm. The enzyme catalyses Exonucleolytic cleavage in either 5'- to 3'- or 3'- to 5'-direction to yield nucleoside 5'-phosphates.. In terms of biological role, bidirectionally degrades single-stranded DNA into large acid-insoluble oligonucleotides, which are then degraded further into small acid-soluble oligonucleotides. This chain is Exodeoxyribonuclease 7 small subunit, found in Chlamydia abortus (strain DSM 27085 / S26/3) (Chlamydophila abortus).